The primary structure comprises 184 residues: TRAF-interacting protein with FHA domain-containing protein A (184 aa).

At Thr-9 the chain carries Phosphothreonine; by ALPK1. The FHA domain occupies 47-103 (VKFGRNSNICHYTFQDKQVSRVQFSLQLFKKFNSSVLSFEIKNMSKKTNLIVDSREL). Residues 165–184 (TYSLCSSQSSSPTEMDENES) are disordered. Polar residues predominate over residues 167–177 (SLCSSQSSSPT).

This sequence belongs to the TIFA family. Homooligomer; homooligomerizes following phosphorylation at Thr-9. Interacts with IRAK1, TRAF2 and TRAF6. Interacts with TIFAB; binding to TIFAB inhibits TRAF6 activation, possibly by inducing a conformational change in TIFA. Interacts with ZCCHC11; binding to ZCCHC11 suppresses the TRAF6-dependent activation of NF-kappa-B. In terms of processing, phosphorylated at Thr-9 following detection of ADP-D-glycero-beta-D-manno-heptose (ADP-Heptose) by ALPK1. Phosphorylation at Thr-9 by ALPK1 leads to the formation of an intermolecular binding between the FHA domain and phosphorylated Thr-9, promoting TIFA oligomerization and TIFA-mediated NF-kappa-B activation.

The protein resides in the cytoplasm. Functionally, adapter molecule that plays a key role in the activation of pro-inflammatory NF-kappa-B signaling following detection of bacterial pathogen-associated molecular pattern metabolites (PAMPs). Promotes activation of an innate immune response by inducing the oligomerization and polyubiquitination of TRAF6, which leads to the activation of TAK1 and IKK through a proteasome-independent mechanism. TIFA-dependent innate immune response is triggered by ADP-D-glycero-beta-D-manno-heptose (ADP-Heptose), a potent PAMP present in all Gram-negative and some Gram-positive bacteria: ADP-Heptose is recognized by ALPK1, which phosphorylates TIFA at Thr-9, leading to TIFA homooligomerization and subsequent activation of pro-inflammatory NF-kappa-B signaling. This is TRAF-interacting protein with FHA domain-containing protein A from Homo sapiens (Human).